A 341-amino-acid chain; its full sequence is MRKDLIELDGSEGGGQILRSALSLSMTSGQPLRIRNIRGRRSRPGLLRQHLTAVRAAAEICAAEVEGAELGSRELAFRPGAIRAGDYAFAIGSAGSCSLVLQTLLPALLAANGESRVRISGGTHNPLAPPADFLRDSWLPLLQRMGAEVDLELLRHGFVPAGGGELLARVRPARWRPLQLEHPGAALRRQARALLAGIPGHVGERELERVRQRLGWSDEERQLEFLAEDQGPGNALLLRIDCEHICATFCAFGQAGVSAERVAEQVATQAIGWMESGCAADEHLADQLLLPMALAGAGSFTTPRLSAHLQSNRRVIERFLPVRIGDQALDGGGHRIVITSA.

Residues glutamine 102 and 283 to 287 (HLADQ) each bind ATP. Catalysis depends on histidine 308, which acts as the Tele-AMP-histidine intermediate.

This sequence belongs to the RNA 3'-terminal cyclase family. Type 1 subfamily.

It localises to the cytoplasm. The catalysed reaction is a 3'-end 3'-phospho-ribonucleotide-RNA + ATP = a 3'-end 2',3'-cyclophospho-ribonucleotide-RNA + AMP + diphosphate. Functionally, catalyzes the conversion of 3'-phosphate to a 2',3'-cyclic phosphodiester at the end of RNA. The mechanism of action of the enzyme occurs in 3 steps: (A) adenylation of the enzyme by ATP; (B) transfer of adenylate to an RNA-N3'P to produce RNA-N3'PP5'A; (C) and attack of the adjacent 2'-hydroxyl on the 3'-phosphorus in the diester linkage to produce the cyclic end product. The biological role of this enzyme is unknown but it is likely to function in some aspects of cellular RNA processing. This is RNA 3'-terminal phosphate cyclase from Pseudomonas aeruginosa (strain UCBPP-PA14).